Consider the following 712-residue polypeptide: Cadherin-13 (712 aa).

Residues 1 to 22 (MQHKTQLTLSFLLSQVLLLACA) form the signal peptide. Residues 23–138 (EDLECTPGFQ…GNLGIPRQKR (116 aa)) constitute a propeptide that is removed on maturation. N-linked (GlcNAc...) asparagine glycosylation occurs at N86. Cadherin domains are found at residues 143 to 245 (TPIL…RPMF), 246 to 363 (KEGP…PPEF), 364 to 477 (TKKE…GPVF), 478 to 585 (HPNP…VPSL), and 586 to 680 (YPTL…LQVC). N382, N500, N530, N638, and N671 each carry an N-linked (GlcNAc...) asparagine glycan. The GPI-anchor amidated aspartate moiety is linked to residue D693. The propeptide at 694-712 (ALHISMTLILLSLFSLFCL) is removed in mature form.

In terms of assembly, by contrast to classical cadherins, homodimerization in trans is not mediated by cadherin EC1 domain strand-swapping, but instead through a homophilic adhesive interface which joins two elongated EC1-EC2 domains through a region near their Ca2+-binding sites to form a tetrahedral, X-like shape. As to expression, neural tissues. Also found in muscles; kidney and retina.

Its subcellular location is the cell membrane. It is found in the cytoplasm. Its function is as follows. Cadherins are calcium-dependent cell adhesion proteins. They preferentially interact with themselves in a homophilic manner in connecting cells; cadherins may thus contribute to the sorting of heterogeneous cell types. May act as a negative regulator of neural cell growth. The polypeptide is Cadherin-13 (CDH13) (Gallus gallus (Chicken)).